The following is a 271-amino-acid chain: Mannosyl-3-phosphoglycerate phosphatase (271 aa).

The active-site Nucleophile is the D13. D13, D15, and D214 together coordinate Mg(2+).

The protein belongs to the HAD-like hydrolase superfamily. MPGP family. Mg(2+) serves as cofactor.

Its subcellular location is the cytoplasm. The catalysed reaction is 2-O-(alpha-D-mannosyl)-3-phosphoglycerate + H2O = (2R)-2-O-(alpha-D-mannosyl)-glycerate + phosphate. This is Mannosyl-3-phosphoglycerate phosphatase from Escherichia coli O81 (strain ED1a).